The chain runs to 361 residues: Peptide chain release factor 1 (361 aa).

Q235 carries the N5-methylglutamine modification. A disordered region spans residues 283 to 306 (RSQQATAEAMTRKLQVGSGDRSQR).

It belongs to the prokaryotic/mitochondrial release factor family. Methylated by PrmC. Methylation increases the termination efficiency of RF1.

The protein localises to the cytoplasm. Peptide chain release factor 1 directs the termination of translation in response to the peptide chain termination codons UAG and UAA. The protein is Peptide chain release factor 1 of Xylella fastidiosa (strain M23).